We begin with the raw amino-acid sequence, 278 residues long: MTTLGTPVSLGRRTRTGRLELEFGVRHGQTALLRDLQKAPLMVVRPFRLPCGTLMVFIVNPTGGVLGGDHSEIHVEAGAGTRVLILTQSATRVQPSPGGEWATQELHFHVGVGARLEYYPERTLPFAGSRFRQHLRADLGAGAEFGLLETLASGRVQMGERLAWADYRSEVSVYAAQERVYLDRQHFRPGPHSRAPGVLGGNDYFASGVWVAGDSAAGRPAAESPTTAPGWASGLSAGGAVWARGVAATGPALDHAARQLREQVRHDLFGAAPLVLRR.

This sequence belongs to the UreD family. In terms of assembly, ureD, UreF and UreG form a complex that acts as a GTP-hydrolysis-dependent molecular chaperone, activating the urease apoprotein by helping to assemble the nickel containing metallocenter of UreC. The UreE protein probably delivers the nickel.

Its subcellular location is the cytoplasm. Its function is as follows. Required for maturation of urease via the functional incorporation of the urease nickel metallocenter. The sequence is that of Urease accessory protein UreD from Deinococcus radiodurans (strain ATCC 13939 / DSM 20539 / JCM 16871 / CCUG 27074 / LMG 4051 / NBRC 15346 / NCIMB 9279 / VKM B-1422 / R1).